The following is a 524-amino-acid chain: Probable myosin-binding protein 5 (524 aa).

Residues 20–40 (FLIYALLEWILIIILFIDGFL) traverse the membrane as a helical segment. Positions 299–397 (SILQHLNRQV…ELEAGIEVYR (99 aa)) constitute a GTD-binding domain. The stretch at 462–490 (SRKDMLVKEISEITERLNAIESKGELLQQ) forms a coiled coil.

Its subcellular location is the membrane. Its function is as follows. Probable membrane-anchored myosin receptors. In Arabidopsis thaliana (Mouse-ear cress), this protein is Probable myosin-binding protein 5.